A 517-amino-acid chain; its full sequence is Xaa-Pro dipeptidase (517 aa).

Mn(2+)-binding residues include D244, D255, H336, E381, and E420.

It belongs to the peptidase M24B family. Bacterial-type prolidase subfamily. Monomer. Requires Mn(2+) as cofactor.

The catalysed reaction is Xaa-L-Pro dipeptide + H2O = an L-alpha-amino acid + L-proline. The enzyme catalyses diisopropyl fluorophosphate + H2O = diisopropyl phosphate + fluoride + 2 H(+). It catalyses the reaction An aryl dialkyl phosphate + H2O = dialkyl phosphate + an aryl alcohol.. Its function is as follows. Splits dipeptides with a prolyl or hydroxyprolyl residue in the C-terminal position and a nonpolar amino acid at the N-terminal position. Also catalyzes the hydrolysis of toxic organophosphorus cholinesterase-inhibiting compounds including insecticide paraoxon and nerve gases such as diisopropylfluorophosphate (DFP), O-isopropyl methylphosphonofluoridate (sarin), O-pinacolyl methylphosphonofluoridate (soman), and O-cyclohexyl methylphosphonofluoridate. The polypeptide is Xaa-Pro dipeptidase (pepQ) (Alteromonas sp).